A 432-amino-acid polypeptide reads, in one-letter code: Adenylosuccinate synthetase (432 aa).

GTP is bound by residues 13–19 (GDEGKGK) and 41–43 (GHT). Asp14 serves as the catalytic Proton acceptor. 2 residues coordinate Mg(2+): Asp14 and Gly41. IMP is bound by residues 14–17 (DEGK), 39–42 (NAGH), Thr130, Arg144, Gln225, Thr240, and Arg304. The Proton donor role is filled by His42. 300–306 (ATTGRRR) is a binding site for substrate. Residues Arg306, 332-334 (KLD), and 415-417 (STG) contribute to the GTP site.

It belongs to the adenylosuccinate synthetase family. In terms of assembly, homodimer. It depends on Mg(2+) as a cofactor.

The protein resides in the cytoplasm. It catalyses the reaction IMP + L-aspartate + GTP = N(6)-(1,2-dicarboxyethyl)-AMP + GDP + phosphate + 2 H(+). It participates in purine metabolism; AMP biosynthesis via de novo pathway; AMP from IMP: step 1/2. In terms of biological role, plays an important role in the de novo pathway of purine nucleotide biosynthesis. Catalyzes the first committed step in the biosynthesis of AMP from IMP. The protein is Adenylosuccinate synthetase of Salmonella paratyphi C (strain RKS4594).